Reading from the N-terminus, the 382-residue chain is Pyrimidine monooxygenase RutA (382 aa).

FMN-binding positions include 68–69, Asn-134, Glu-143, 159–160, and Ser-209; these read IK and RY.

Belongs to the NtaA/SnaA/DszA monooxygenase family. RutA subfamily.

The catalysed reaction is uracil + FMNH2 + NADH + O2 = (Z)-3-ureidoacrylate + FMN + NAD(+) + H2O + H(+). It carries out the reaction thymine + FMNH2 + NADH + O2 = (Z)-2-methylureidoacrylate + FMN + NAD(+) + H2O + H(+). Functionally, catalyzes the pyrimidine ring opening between N-3 and C-4 by an unusual flavin hydroperoxide-catalyzed mechanism, adding oxygen atoms in the process to yield ureidoacrylate peracid, that immediately reacts with FMN forming ureidoacrylate and FMN-N(5)-oxide. The FMN-N(5)-oxide reacts spontaneously with NADH to produce FMN. Requires the flavin reductase RutF to regenerate FMN in vivo. The sequence is that of Pyrimidine monooxygenase RutA from Escherichia coli (strain K12 / MC4100 / BW2952).